We begin with the raw amino-acid sequence, 173 residues long: Signal peptidase complex catalytic subunit SEC11 (173 aa).

Topologically, residues 1–15 (MLGVSGMQPRQLAAQ) are cytoplasmic. Residues 16–36 (ILNFALVLSTAFMMWKGLSVV) form a helical; Signal-anchor for type II membrane protein membrane-spanning segment. At 37–173 (SDSSSPIVVV…MGVMVVLQRE (137 aa)) the chain is on the lumenal side. Active-site charge relay system residues include S50, H89, and D115. Residues 159–170 (VMLGLMGVMVVL) are C-terminal short (CTS) helix.

It belongs to the peptidase S26B family. In terms of assembly, component of the signal peptidase complex (SPC) composed of a catalytic subunit SEC11 and three accessory subunits SPC1, SPC2 and SPC3. The complex induces a local thinning of the ER membrane which is used to measure the length of the signal peptide (SP) h-region of protein substrates. This ensures the selectivity of the complex towards h-regions shorter than 18-20 amino acids. SPC associates with the translocon complex.

Its subcellular location is the endoplasmic reticulum membrane. The enzyme catalyses Cleavage of hydrophobic, N-terminal signal or leader sequences from secreted and periplasmic proteins.. Functionally, catalytic component of the signal peptidase complex (SPC) which catalyzes the cleavage of N-terminal signal sequences from nascent proteins as they are translocated into the lumen of the endoplasmic reticulum. Specifically cleaves N-terminal signal peptides that contain a hydrophobic alpha-helix (h-region) shorter than 18-20 amino acids. This chain is Signal peptidase complex catalytic subunit SEC11 (SEC11), found in Leptosphaeria maculans (strain JN3 / isolate v23.1.3 / race Av1-4-5-6-7-8) (Blackleg fungus).